The primary structure comprises 334 residues: Fructose-1,6-bisphosphatase class 1 (334 aa).

Residues Glu-89, Asp-112, Leu-114, and Asp-115 each coordinate Mg(2+). Substrate contacts are provided by residues 115 to 118 (DGSS), Asn-208, Tyr-241, and Lys-271. Glu-277 lines the Mg(2+) pocket.

It belongs to the FBPase class 1 family. Homotetramer. The cofactor is Mg(2+).

It is found in the cytoplasm. The catalysed reaction is beta-D-fructose 1,6-bisphosphate + H2O = beta-D-fructose 6-phosphate + phosphate. It functions in the pathway carbohydrate biosynthesis; gluconeogenesis. This Serratia proteamaculans (strain 568) protein is Fructose-1,6-bisphosphatase class 1.